Here is a 371-residue protein sequence, read N- to C-terminus: Cytochrome b (371 aa).

Helical transmembrane passes span 25-45 (FGSMLLSCLMLQVTTGFFLAV), 69-90 (WMMQNTHAIGASLFFICIYIHI), 105-125 (WMSGTTLLITLMATAFFGYIL), and 170-190 (FFALHFILPFIIISLSSLHIL). Heme b-binding residues include H75 and H89. 2 residues coordinate heme b: H174 and H188. H193 is an a ubiquinone binding site. 4 helical membrane-spanning segments follow: residues 218–238 (YKDLLLLTLLLTLLLLTTFFL), 280–300 (LGGALALVASILIIMTMPFTH), 312–332 (MSQLMFWTLISTFMTITWAAT), and 339–358 (FMMISQTASMIYFMFFISNP).

This sequence belongs to the cytochrome b family. The cytochrome bc1 complex contains 3 respiratory subunits (MT-CYB, CYC1 and UQCRFS1), 2 core proteins (UQCRC1 and UQCRC2) and probably 6 low-molecular weight proteins. The cofactor is heme b.

The protein localises to the mitochondrion inner membrane. In terms of biological role, component of the ubiquinol-cytochrome c reductase complex (complex III or cytochrome b-c1 complex) that is part of the mitochondrial respiratory chain. The b-c1 complex mediates electron transfer from ubiquinol to cytochrome c. Contributes to the generation of a proton gradient across the mitochondrial membrane that is then used for ATP synthesis. The polypeptide is Cytochrome b (MT-CYB) (Casarea dussumieri (Round Island keel-scaled boa)).